Consider the following 38-residue polypeptide: Zinc-containing ferredoxin (38 aa).

Polar residues predominate over residues 1-11 (GIDPNFRTSRP). Positions 1 to 38 (GIDPNFRTSRPVTGDHAGHKVYAPADPPVKEKALGIHG) are disordered. Residues 1–38 (GIDPNFRTSRPVTGDHAGHKVYAPADPPVKEKALGIHG) are N-terminal extension. 2 residues coordinate Zn(2+): His-16 and His-19. Residues 28–38 (PVKEKALGIHG) show a composition bias toward basic and acidic residues. Lys-30 carries the post-translational modification N6-methyllysine. Position 37 (His-37) interacts with Zn(2+).

[3Fe-4S] cluster serves as cofactor. [4Fe-4S] cluster is required as a cofactor. Requires Zn(2+) as cofactor.

In terms of biological role, ferredoxins are iron-sulfur proteins that transfer electrons in a wide variety of metabolic reactions. The protein is Zinc-containing ferredoxin (zfx) of Metallosphaera prunae.